A 331-amino-acid chain; its full sequence is Probable serine hydrolase (331 aa).

The segment at 1-28 is disordered; sequence MGQTRVAATTAAQSPAAELSPETNGQTE. Low complexity predominate over residues 7–17; sequence AATTAAQSPAA. Residues 63–163 form the AB hydrolase-1 domain; the sequence is PIIALHGWQD…EVEKLINIDI (101 aa). The active site involves Ser-138.

Belongs to the AB hydrolase superfamily. As to expression, ubiquitously expressed before embryonic stage 11. At stage 11, expression is concentrated in the foregut and posterior midgut. By stage 15, in gastric caeca, pharynx, posterior spiracles and anterior edge of midgut. At the end of embryogenesis, expression is confined to gastric caeca. During third instar larvae, expressed at low levels in gastric caeca, midgut and hindgut and high level in fat body.

In terms of biological role, may have a role in detoxification and digestion during embryogenesis and larval development. The sequence is that of Probable serine hydrolase (kraken) from Drosophila melanogaster (Fruit fly).